The primary structure comprises 783 residues: Polyribonucleotide nucleotidyltransferase 1, mitochondrial (783 aa).

The transit peptide at 1 to 46 (MAACRYCCSCLRLRPLSDGPFCLPGRDRALTQLLVRALWSSTGSRA) directs the protein to the mitochondrion. K250, K264, K285, and K289 each carry N6-acetyllysine. K552 carries the N6-succinyllysine modification. Positions 605-664 (PVVETVQVPLSKRAKFVGPGGYNLKKLQAETGVTISQVDEETFSVFAPTPSALHEARDFI) constitute a KH domain. Positions 679–750 (GAVYTATITE…ADGRMRLSRK (72 aa)) constitute an S1 motif domain. Phosphoserine is present on residues S754 and S782.

This sequence belongs to the polyribonucleotide nucleotidyltransferase family. Homotrimer; in free form. Homooligomer. Component of the mitochondrial degradosome (mtEXO) complex which is a heteropentamer containing 2 copies of SUPV3L1 and 3 copies of PNPT1. As part of the mitochondrial degradosome complex, interacts with GRSF1 in an RNA-dependent manner; the interaction enhances the activity of the complex. Interacts with TCL1A; the interaction has no effect on PNPT1 exonuclease activity.

The protein localises to the cytoplasm. The protein resides in the mitochondrion matrix. Its subcellular location is the mitochondrion intermembrane space. It carries out the reaction RNA(n+1) + phosphate = RNA(n) + a ribonucleoside 5'-diphosphate. In terms of biological role, RNA-binding protein implicated in numerous RNA metabolic processes. Catalyzes the phosphorolysis of single-stranded polyribonucleotides processively in the 3'-to-5' direction. Mitochondrial intermembrane factor with RNA-processing exoribonulease activity. Component of the mitochondrial degradosome (mtEXO) complex, that degrades 3' overhang double-stranded RNA with a 3'-to-5' directionality in an ATP-dependent manner. Involved in the degradation of non-coding mitochondrial transcripts (MT-ncRNA) and tRNA-like molecules. Required for correct processing and polyadenylation of mitochondrial mRNAs. Plays a role as a cytoplasmic RNA import factor that mediates the translocation of small RNA components like the 5S RNA, the RNA subunit of ribonuclease P and the mitochondrial RNA-processing (MRP) RNA, into the mitochondrial matrix. Plays a role in mitochondrial morphogenesis and respiration; regulates the expression of the electron transport chain (ETC) components at the mRNA and protein levels. In the cytoplasm, shows a 3'-to-5' exoribonuclease mediating mRNA degradation activity; degrades c-myc mRNA upon treatment with IFNB1/IFN-beta, resulting in a growth arrest in melanoma cells. Regulates the stability of specific mature miRNAs in melanoma cells; specifically and selectively degrades miR-221, preferentially. Also plays a role in RNA cell surveillance by cleaning up oxidized RNAs. Binds to the RNA subunit of ribonuclease P, MRP RNA and miR-221 microRNA. This chain is Polyribonucleotide nucleotidyltransferase 1, mitochondrial (PNPT1), found in Pongo abelii (Sumatran orangutan).